The following is a 490-amino-acid chain: Doublesex- and mab-3-related transcription factor A1 (490 aa).

Over residues 1–13 (MERLPHGRRDRSG) the composition is skewed to basic and acidic residues. The segment at 1–31 (MERLPHGRRDRSGGCRPHLAPGRAAAPASAA) is disordered. Low complexity predominate over residues 20-31 (APGRAAAPASAA). The segment at residues 86–133 (CARCRNHGVVSALKGHKRFCRWRDCACAKCTLIAERQRVMAAQVALRR) is a DNA-binding region (DM). Disordered regions lie at residues 152–171 (GSSG…ESPQ) and 207–289 (DRKQ…DLES). A compositionally biased stretch (basic and acidic residues) spans 207-216 (DRKQEPKQRN). Polar residues-rich tracts occupy residues 217–242 (CESC…SKGN) and 269–289 (PTDQ…DLES). Positions 314–349 (RDPLGILTRIFPGYKHSRLEGILQFCKGDVVQAIEQ) constitute a DMA domain.

This sequence belongs to the DMRT family. As to expression, widely expressed, with highest levels in ovary, testis, epididymis, preputial gland, vomeronasal organ, liver, salivary glands and heart. Also expressed throughout the brain with highest levels in the olfactory bulbs and medulla. Detected at similar levels in gonads of both sexes.

The protein localises to the nucleus. This is Doublesex- and mab-3-related transcription factor A1 (Dmrta1) from Mus musculus (Mouse).